The sequence spans 214 residues: Homeobox protein HEX homolog pha-2 (214 aa).

2 disordered regions span residues 1-50 (MDQK…QKME) and 180-214 (RRVR…LSHG). A compositionally biased stretch (low complexity) spans 24 to 34 (SSESPIPTGSE). The span at 35-44 (CSLNESSDTT) shows a compositional bias: polar residues. Positions 124–183 (RKGGQIRFTNEQTDALEHKFDSHKYLSPQERKKLAKSLSLSERQVKTWFQNRRAKWRRVR) form a DNA-binding region, homeobox. A compositionally biased stretch (polar residues) spans 200–214 (SLGQLQSSNPFLSHG).

It localises to the nucleus. In terms of biological role, transcriptional repressor. Involved in pharyngeal development and required for the formation of the pharyngeal isthmus. Plays a role in modulating cytoskeleton in the muscle cells of the isthmus. Regulates expression of the acetylcholinesterase genes ace-1 and ace-2. May regulate its own expression. The chain is Homeobox protein HEX homolog pha-2 from Caenorhabditis elegans.